The primary structure comprises 1340 residues: Early transcription factor large subunit homolog (1340 aa).

The protein resides in the virion. In terms of biological role, putative initation factor. This Ornithodoros (relapsing fever ticks) protein is Early transcription factor large subunit homolog.